We begin with the raw amino-acid sequence, 321 residues long: Lipoyl synthase (321 aa).

C68, C73, C79, C94, C98, C101, and S308 together coordinate [4Fe-4S] cluster. One can recognise a Radical SAM core domain in the interval 80-297 (FNHGTATFMI…KAEALAMGFT (218 aa)).

The protein belongs to the radical SAM superfamily. Lipoyl synthase family. It depends on [4Fe-4S] cluster as a cofactor.

The protein resides in the cytoplasm. It catalyses the reaction [[Fe-S] cluster scaffold protein carrying a second [4Fe-4S](2+) cluster] + N(6)-octanoyl-L-lysyl-[protein] + 2 oxidized [2Fe-2S]-[ferredoxin] + 2 S-adenosyl-L-methionine + 4 H(+) = [[Fe-S] cluster scaffold protein] + N(6)-[(R)-dihydrolipoyl]-L-lysyl-[protein] + 4 Fe(3+) + 2 hydrogen sulfide + 2 5'-deoxyadenosine + 2 L-methionine + 2 reduced [2Fe-2S]-[ferredoxin]. It functions in the pathway protein modification; protein lipoylation via endogenous pathway; protein N(6)-(lipoyl)lysine from octanoyl-[acyl-carrier-protein]: step 2/2. Catalyzes the radical-mediated insertion of two sulfur atoms into the C-6 and C-8 positions of the octanoyl moiety bound to the lipoyl domains of lipoate-dependent enzymes, thereby converting the octanoylated domains into lipoylated derivatives. The polypeptide is Lipoyl synthase (Salmonella typhi).